A 527-amino-acid polypeptide reads, in one-letter code: Putative ribose/galactose/methyl galactoside import ATP-binding protein 2 (527 aa).

The tract at residues 1–31 is disordered; that stretch reads MFTARVARPMAGDDAPAASSGSTGSSAPPAS. Positions 12-31 are enriched in low complexity; sequence GDDAPAASSGSTGSSAPPAS. ABC transporter domains follow at residues 38–274 and 284–523; these read LEVR…VGRE and VPIG…RIMD. 70 to 77 serves as a coordination point for ATP; sequence GENGAGKS.

This sequence belongs to the ABC transporter superfamily. Carbohydrate importer 2 (CUT2) (TC 3.A.1.2) family.

The protein resides in the cell inner membrane. The enzyme catalyses D-ribose(out) + ATP + H2O = D-ribose(in) + ADP + phosphate + H(+). It catalyses the reaction D-galactose(out) + ATP + H2O = D-galactose(in) + ADP + phosphate + H(+). Part of an ABC transporter complex involved in carbohydrate import. Could be involved in ribose, galactose and/or methyl galactoside import. Responsible for energy coupling to the transport system. In Burkholderia lata (strain ATCC 17760 / DSM 23089 / LMG 22485 / NCIMB 9086 / R18194 / 383), this protein is Putative ribose/galactose/methyl galactoside import ATP-binding protein 2.